Here is a 366-residue protein sequence, read N- to C-terminus: Erythronate-4-phosphate dehydrogenase (366 aa).

The substrate site is built by serine 46 and threonine 67. Positions 147 and 175 each coordinate NAD(+). Residue arginine 208 is part of the active site. Aspartate 228 provides a ligand contact to NAD(+). Glutamate 233 is an active-site residue. Residue histidine 250 is the Proton donor of the active site. NAD(+) is bound at residue glycine 253. Tyrosine 254 provides a ligand contact to substrate.

This sequence belongs to the D-isomer specific 2-hydroxyacid dehydrogenase family. PdxB subfamily. As to quaternary structure, homodimer.

Its subcellular location is the cytoplasm. It carries out the reaction 4-phospho-D-erythronate + NAD(+) = (R)-3-hydroxy-2-oxo-4-phosphooxybutanoate + NADH + H(+). It participates in cofactor biosynthesis; pyridoxine 5'-phosphate biosynthesis; pyridoxine 5'-phosphate from D-erythrose 4-phosphate: step 2/5. Catalyzes the oxidation of erythronate-4-phosphate to 3-hydroxy-2-oxo-4-phosphonooxybutanoate. The sequence is that of Erythronate-4-phosphate dehydrogenase from Coxiella burnetii (strain RSA 331 / Henzerling II).